The primary structure comprises 228 residues: 5'-methylthioadenosine/S-adenosylhomocysteine nucleosidase (228 aa).

Glutamate 11 functions as the Proton acceptor in the catalytic mechanism. Substrate-binding positions include glycine 77, isoleucine 151, and 172–173; that span reads ME. The Proton donor role is filled by aspartate 196.

It belongs to the PNP/UDP phosphorylase family. MtnN subfamily.

The catalysed reaction is S-adenosyl-L-homocysteine + H2O = S-(5-deoxy-D-ribos-5-yl)-L-homocysteine + adenine. It catalyses the reaction S-methyl-5'-thioadenosine + H2O = 5-(methylsulfanyl)-D-ribose + adenine. It carries out the reaction 5'-deoxyadenosine + H2O = 5-deoxy-D-ribose + adenine. It participates in amino-acid biosynthesis; L-methionine biosynthesis via salvage pathway; S-methyl-5-thio-alpha-D-ribose 1-phosphate from S-methyl-5'-thioadenosine (hydrolase route): step 1/2. Its function is as follows. Catalyzes the irreversible cleavage of the glycosidic bond in both 5'-methylthioadenosine (MTA) and S-adenosylhomocysteine (SAH/AdoHcy) to adenine and the corresponding thioribose, 5'-methylthioribose and S-ribosylhomocysteine, respectively. Also cleaves 5'-deoxyadenosine, a toxic by-product of radical S-adenosylmethionine (SAM) enzymes, into 5-deoxyribose and adenine. This chain is 5'-methylthioadenosine/S-adenosylhomocysteine nucleosidase, found in Staphylococcus epidermidis (strain ATCC 12228 / FDA PCI 1200).